A 499-amino-acid chain; its full sequence is ALBINO3-like protein 1, chloroplastic (499 aa).

A chloroplast-targeting transit peptide spans 1–45 (MSSTISLKPTHLILSSFSTGKVLQFRRSRFSHTPSSSSSRYRTLV). A run of 4 helical transmembrane segments spans residues 115–135 (LSTV…TVLV), 184–204 (LAGI…PVWI), 263–283 (LAYL…IQIM), and 302–322 (LLPL…SLYW). The segment at 378–499 (LKIPREKGGE…QQHSHETEKR (122 aa)) is disordered. 3 stretches are compositionally biased toward basic and acidic residues: residues 379–420 (KIPR…RQKA), 430–452 (DKAH…KKTE), and 486–499 (HDTE…TEKR). Positions 397–436 (GERFRLLKEQEAKRRREKEERQKAEAALSNQNTDKAHEQD) form a coiled coil.

It belongs to the OXA1/ALB3/YidC (TC 2.A.9.2) family. As to quaternary structure, homodimer. Interacts with ALB3. Interacts with STIC2. As to expression, highly expressed in green tissues.

It is found in the plastid. The protein resides in the chloroplast thylakoid membrane. Required for the insertion of some light harvesting chlorophyll-binding proteins (LHCP) into the chloroplast thylakoid membrane. Plays a role in the accumulation of some cytochrome b6f components in the thylakoid membrane. Required for the assembly and/or stability of the F(1)F(0) ATP synthase in chloroplast thylakoid membranes. Functions to stabilize or promote assembly of F(1) during its attachment to the membrane-embedded F(0) part. Participates with STIC2 in thylakoid protein targeting. May function with a specific subset of thylakoidal proteins. The chain is ALBINO3-like protein 1, chloroplastic from Arabidopsis thaliana (Mouse-ear cress).